The following is a 178-amino-acid chain: Large ribosomal subunit protein uL6 (178 aa).

Belongs to the universal ribosomal protein uL6 family. As to quaternary structure, part of the 50S ribosomal subunit.

This protein binds to the 23S rRNA, and is important in its secondary structure. It is located near the subunit interface in the base of the L7/L12 stalk, and near the tRNA binding site of the peptidyltransferase center. The protein is Large ribosomal subunit protein uL6 of Lactococcus lactis subsp. lactis (strain IL1403) (Streptococcus lactis).